Reading from the N-terminus, the 53-residue chain is Natriuretic peptide DNP-2 (53 aa).

C7 and C23 are oxidised to a cystine. The propeptide occupies 39–53 (IIRDLHPDSKQSQAA).

This sequence belongs to the natriuretic peptide family. As to expression, expressed by the venom gland.

It localises to the secreted. Its function is as follows. Exhibits vasodilator, natriuretic and diuretic properties in animal models and human tissues. Acts by stimulating cGMP via the natriuretic peptide receptor 1 (NPR1). Is a poor agonist of the atrial natriuretic peptide receptor 2 (NPR2). Is not degraded by neutral endopeptidase (NEP/MME). Binds to atrial natriuretic peptide clearance receptor (NPR-C/NPR3), which may be responsible of the removal of DNP from the circulation. Increases calcium uptake and induces histamine release from rat peritoneal mast cells. Increases calcium-activated potassium (KCa) current in gastric antral circular smooth muscle cells by increasing cGMP production and activating inositol trisphosphate receptors (IP3Rs). In vivo, reduces both systolic and diastolic blood pressure with no effect on heart rate, when intravenously injected in conscious rabbits. The sequence is that of Natriuretic peptide DNP-2 from Dendroaspis angusticeps (Eastern green mamba).